A 414-amino-acid chain; its full sequence is Methylthioribose-1-phosphate isomerase (414 aa).

The segment covering 205–215 (SQSQGSENPPS) has biased composition (polar residues). The disordered stretch occupies residues 205–224 (SQSQGSENPPSKKQKKDAAP). Aspartate 283 (proton donor) is an active-site residue.

The protein belongs to the eIF-2B alpha/beta/delta subunits family. MtnA subfamily.

Its subcellular location is the cytoplasm. The protein resides in the nucleus. It carries out the reaction 5-(methylsulfanyl)-alpha-D-ribose 1-phosphate = 5-(methylsulfanyl)-D-ribulose 1-phosphate. Its pathway is amino-acid biosynthesis; L-methionine biosynthesis via salvage pathway; L-methionine from S-methyl-5-thio-alpha-D-ribose 1-phosphate: step 1/6. In terms of biological role, catalyzes the interconversion of methylthioribose-1-phosphate (MTR-1-P) into methylthioribulose-1-phosphate (MTRu-1-P). The sequence is that of Methylthioribose-1-phosphate isomerase from Zygosaccharomyces rouxii (strain ATCC 2623 / CBS 732 / NBRC 1130 / NCYC 568 / NRRL Y-229).